Consider the following 188-residue polypeptide: Viral FLICE protein (188 aa).

DED domains lie at 2–74 (ATYE…DLLH) and 93–169 (PYQL…QVQT).

As to quaternary structure, interacts with host RIPK1, TRAF2, MAP3K14, IKBKB, and IKBKG. Interacts with host CADM1; this interaction is essential for chronic NF-kappa-B activation.

In terms of biological role, plays a role in the modulation of host signaling pathways by acting as an activator of both the classic and the alternative NF-kappa-B pathways. Thereby, initiates an important range of cellular processes to promote cell survival, proliferation and protection from apoptosis. The sequence is that of Viral FLICE protein (ORF71) from Human herpesvirus 8 type P (isolate GK18) (HHV-8).